A 1161-amino-acid polypeptide reads, in one-letter code: Auxin response factor 19 (1161 aa).

The tract at residues 1–20 (MMKQAQQQPPPPPASSAATT) is disordered. Positions 154–256 (FCKTLTASDT…QLLLGIRRAN (103 aa)) form a DNA-binding region, TF-B3. Residues 573–598 (NQMQQQHASSTQGQQPATSQPLLLPQ) form a disordered region. In terms of domain architecture, PB1 spans 1027–1111 (RTFTKVYKRG…KCIRILSPQE (85 aa)).

Belongs to the ARF family. In terms of assembly, homodimers and heterodimers. In terms of tissue distribution, expressed in roots, culms, leaves and young panicles.

It localises to the nucleus. Functionally, auxin response factors (ARFs) are transcriptional factors that bind specifically to the DNA sequence 5'-TGTCTC-3' found in the auxin-responsive promoter elements (AuxREs). The chain is Auxin response factor 19 (ARF19) from Oryza sativa subsp. japonica (Rice).